The sequence spans 509 residues: Maturase K (509 aa).

Belongs to the intron maturase 2 family. MatK subfamily.

Its subcellular location is the plastid. The protein resides in the chloroplast. In terms of biological role, usually encoded in the trnK tRNA gene intron. Probably assists in splicing its own and other chloroplast group II introns. The sequence is that of Maturase K from Thuja occidentalis (Northern white-cedar).